Here is a 57-residue protein sequence, read N- to C-terminus: Protein translocase subunit SecE (57 aa).

A helical transmembrane segment spans residues 33–53 (GAGIFLVGLLGFIIFAVMSFL).

The protein belongs to the SecE/SEC61-gamma family. Component of the Sec protein translocase complex. Heterotrimer consisting of SecY (alpha), SecG (beta) and SecE (gamma) subunits. The heterotrimers can form oligomers, although 1 heterotrimer is thought to be able to translocate proteins. Interacts with the ribosome. May interact with SecDF, and other proteins may be involved.

Its subcellular location is the cell membrane. Its function is as follows. Essential subunit of the Sec protein translocation channel SecYEG. Clamps together the 2 halves of SecY. May contact the channel plug during translocation. This Haloferax mediterranei (strain ATCC 33500 / DSM 1411 / JCM 8866 / NBRC 14739 / NCIMB 2177 / R-4) (Halobacterium mediterranei) protein is Protein translocase subunit SecE.